The primary structure comprises 78 residues: uncharacterized protein (78 aa).

This is an uncharacterized protein from Plasmodium falciparum (isolate fcm17 / Senegal).